The following is a 642-amino-acid chain: Acid beta-fructofuranosidase (642 aa).

The Cytoplasmic segment spans residues 1–22 (MRNDSPYTPLLNASHNNHRRRE). A propeptide spans 1–95 (MRNDSPYTPL…LSGNLVGEGG (95 aa)) (removed in mature form). Residues 23-43 (LLLLFSGLLLLASIIAFSAYI) form a helical; Signal-anchor for type II membrane protein membrane-spanning segment. The Lumenal portion of the chain corresponds to 44–642 (AQPHADADVS…YHPDQKRQTS (599 aa)). Asparagine 100 is a glycosylation site (N-linked (GlcNAc...) asparagine). Residues 119 to 122 (WMND), glutamine 138, tryptophan 146, 181 to 182 (WT), and 245 to 246 (RD) contribute to the substrate site. The active site involves aspartate 122. N-linked (GlcNAc...) asparagine glycosylation occurs at asparagine 267. Glutamate 300 and aspartate 333 together coordinate substrate. A disulfide bridge links cysteine 490 with cysteine 538. Asparagine 491 and asparagine 615 each carry an N-linked (GlcNAc...) asparagine glycan.

Belongs to the glycosyl hydrolase 32 family. May be present in two forms, a 70 kDa monomer and a heterodimer of the 30 kDa and 38 kDa subunits. The ratio of the levels of the two forms within cells appears to be regulated developmentally.

The protein resides in the membrane. It localises to the vacuole. Its subcellular location is the vacuole lumen. The catalysed reaction is Hydrolysis of terminal non-reducing beta-D-fructofuranoside residues in beta-D-fructofuranosides.. Its pathway is glycan biosynthesis; sucrose metabolism. This Vicia faba (Broad bean) protein is Acid beta-fructofuranosidase (VCINV).